An 83-amino-acid chain; its full sequence is Large ribosomal subunit protein bL27 (83 aa).

The disordered stretch occupies residues 1–21 (MAHKRSSGAGRNGRDSNPKYL).

This sequence belongs to the bacterial ribosomal protein bL27 family.

This Kosmotoga olearia (strain ATCC BAA-1733 / DSM 21960 / TBF 19.5.1) protein is Large ribosomal subunit protein bL27.